Reading from the N-terminus, the 501-residue chain is MAINAQEISALIKKQIENFQPNFDVTETGVVTYIGDGIARARGLDNAMSGELLEFSNGVFGMAQNLESNDVGIIILGDFYTIREGDEVKRTGKIMEVPVGEALIGRVVNPLGQPIDGLGDIKTTATRPVEAPAPGVMQRKSVSEPLQTGLKAVDALVPIGRGQRELIIGDRQTGKTSVAIDAILNQKGQDVICIYVAIGQKESTVRTQVESLRKHGALDYTIVVTASASQPSPLLYIAPYAGVAMAEEFMYNGKHVLIVYDDLSKQAVAYRELSLLLRRPPGREAYPGDVFYLHSRLLERSAKLSDDLGGGSITALPIIQTQAGDISAYIATNVISITDGQIFLQENLFNSGIRPAIDAGSSVSRVGGSAQIKAMKKVAGTLRLDLASYRELEAFTQFGSDLDAATQAKLNRGRRTVEVLKQPLHKPLPVEKQVLILYALTHGFLDSVPVDQILDFEEALYDYFDSHHEDIFETIRSTKDLPEEAVLNEAIQAFKDQSEYK.

169 to 176 (GDRQTGKT) contacts ATP.

The protein belongs to the ATPase alpha/beta chains family. F-type ATPases have 2 components, CF(1) - the catalytic core - and CF(0) - the membrane proton channel. CF(1) has five subunits: alpha(3), beta(3), gamma(1), delta(1), epsilon(1). CF(0) has three main subunits: a(1), b(2) and c(9-12). The alpha and beta chains form an alternating ring which encloses part of the gamma chain. CF(1) is attached to CF(0) by a central stalk formed by the gamma and epsilon chains, while a peripheral stalk is formed by the delta and b chains.

The protein localises to the cell membrane. The catalysed reaction is ATP + H2O + 4 H(+)(in) = ADP + phosphate + 5 H(+)(out). In terms of biological role, produces ATP from ADP in the presence of a proton gradient across the membrane. The alpha chain is a regulatory subunit. The protein is ATP synthase subunit alpha of Streptococcus thermophilus (strain CNRZ 1066).